A 247-amino-acid polypeptide reads, in one-letter code: 2,3-bisphosphoglycerate-dependent phosphoglycerate mutase (247 aa).

Substrate is bound by residues 8–15 (RHGESTWN), 21–22 (TG), Arg-60, 87–90 (ERHY), Lys-98, 114–115 (RR), and 183–184 (GN). His-9 functions as the Tele-phosphohistidine intermediate in the catalytic mechanism. The Proton donor/acceptor role is filled by Glu-87.

Belongs to the phosphoglycerate mutase family. BPG-dependent PGAM subfamily. In terms of assembly, homodimer.

The enzyme catalyses (2R)-2-phosphoglycerate = (2R)-3-phosphoglycerate. Its pathway is carbohydrate degradation; glycolysis; pyruvate from D-glyceraldehyde 3-phosphate: step 3/5. Its function is as follows. Catalyzes the interconversion of 2-phosphoglycerate and 3-phosphoglycerate. The chain is 2,3-bisphosphoglycerate-dependent phosphoglycerate mutase from Delftia acidovorans (strain DSM 14801 / SPH-1).